Here is a 304-residue protein sequence, read N- to C-terminus: Quinolinate synthase (304 aa).

Iminosuccinate-binding residues include His24 and Ser41. Cys86 is a binding site for [4Fe-4S] cluster. Iminosuccinate-binding positions include 112–114 and Ser129; that span reads YVN. Cys171 lines the [4Fe-4S] cluster pocket. Residues 197 to 199 and Thr214 contribute to the iminosuccinate site; that span reads HPE. Cys259 provides a ligand contact to [4Fe-4S] cluster.

The protein belongs to the quinolinate synthase family. Type 2 subfamily. Requires [4Fe-4S] cluster as cofactor.

The protein localises to the cytoplasm. The catalysed reaction is iminosuccinate + dihydroxyacetone phosphate = quinolinate + phosphate + 2 H2O + H(+). Its pathway is cofactor biosynthesis; NAD(+) biosynthesis; quinolinate from iminoaspartate: step 1/1. In terms of biological role, catalyzes the condensation of iminoaspartate with dihydroxyacetone phosphate to form quinolinate. The chain is Quinolinate synthase from Geotalea uraniireducens (strain Rf4) (Geobacter uraniireducens).